The chain runs to 89 residues: Small ribosomal subunit protein uS15 (89 aa).

It belongs to the universal ribosomal protein uS15 family. As to quaternary structure, part of the 30S ribosomal subunit. Forms a bridge to the 50S subunit in the 70S ribosome, contacting the 23S rRNA.

Functionally, one of the primary rRNA binding proteins, it binds directly to 16S rRNA where it helps nucleate assembly of the platform of the 30S subunit by binding and bridging several RNA helices of the 16S rRNA. Its function is as follows. Forms an intersubunit bridge (bridge B4) with the 23S rRNA of the 50S subunit in the ribosome. This Sinorhizobium medicae (strain WSM419) (Ensifer medicae) protein is Small ribosomal subunit protein uS15.